The sequence spans 350 residues: Phosphotriesterase-related protein (350 aa).

A divalent metal cation-binding residues include H22, H24, E169, H201, H230, and D298.

The protein belongs to the metallo-dependent hydrolases superfamily. Phosphotriesterase family. A divalent metal cation serves as cofactor.

This chain is Phosphotriesterase-related protein, found in Drosophila mojavensis (Fruit fly).